The primary structure comprises 141 residues: Nucleoside diphosphate kinase (141 aa).

6 residues coordinate ATP: Lys-11, Phe-59, Arg-87, Thr-93, Arg-104, and Asn-114. The Pros-phosphohistidine intermediate role is filled by His-117.

Belongs to the NDK family. In terms of assembly, homotetramer. It depends on Mg(2+) as a cofactor.

It localises to the cytoplasm. The enzyme catalyses a 2'-deoxyribonucleoside 5'-diphosphate + ATP = a 2'-deoxyribonucleoside 5'-triphosphate + ADP. It carries out the reaction a ribonucleoside 5'-diphosphate + ATP = a ribonucleoside 5'-triphosphate + ADP. In terms of biological role, major role in the synthesis of nucleoside triphosphates other than ATP. The ATP gamma phosphate is transferred to the NDP beta phosphate via a ping-pong mechanism, using a phosphorylated active-site intermediate. The chain is Nucleoside diphosphate kinase from Ralstonia nicotianae (strain ATCC BAA-1114 / GMI1000) (Ralstonia solanacearum).